Reading from the N-terminus, the 553-residue chain is Rhodopsin kinase GRK7 (553 aa).

Position 36 is a phosphoserine; by PKA (serine 36). Residues 56-176 (FHSLCEQQPI…VTSAFYDKFL (121 aa)) enclose the RGS domain. One can recognise a Protein kinase domain in the interval 191–454 (FTEFRVLGKG…SDDPRKHHFF (264 aa)). ATP-binding positions include 197 to 205 (LGKGGFGEV) and lysine 220. The active-site Proton acceptor is the aspartate 316. Residues 455–520 (KTINFPRLEA…GAVPIAWQEE (66 aa)) form the AGC-kinase C-terminal domain. A Cysteine methyl ester modification is found at cysteine 550. Cysteine 550 carries S-geranylgeranyl cysteine lipidation. The propeptide at 551–553 (LLL) is removed in mature form.

Belongs to the protein kinase superfamily. AGC Ser/Thr protein kinase family. GPRK subfamily. Interacts (when prenylated) with PDE6D; this promotes release from membranes. In terms of processing, autophosphorylated in vitro at Ser-490. Phosphorylation at Ser-36 is regulated by light and activated by cAMP. As to expression, retinal cones, outer and inner segments.

The protein localises to the membrane. The enzyme catalyses L-threonyl-[rhodopsin] + ATP = O-phospho-L-threonyl-[rhodopsin] + ADP + H(+). It carries out the reaction L-seryl-[rhodopsin] + ATP = O-phospho-L-seryl-[rhodopsin] + ADP + H(+). Inhibited by phosphorylation of Ser-36. Functionally, retina-specific kinase involved in the shutoff of the photoresponse and adaptation to changing light conditions via cone opsin phosphorylation, including rhodopsin (RHO). This Homo sapiens (Human) protein is Rhodopsin kinase GRK7 (GRK7).